We begin with the raw amino-acid sequence, 502 residues long: Mannitol 2-dehydrogenase (502 aa).

37 to 48 (IVHVGVGGFHRA) is a binding site for NAD(+).

This sequence belongs to the mannitol dehydrogenase family. Monomer.

The enzyme catalyses D-mannitol + NAD(+) = D-fructose + NADH + H(+). Catalyzes the NAD(H)-dependent interconversion of D-fructose and D-mannitol in the mannitol metabolic pathway. The protein is Mannitol 2-dehydrogenase of Aspergillus oryzae (strain ATCC 42149 / RIB 40) (Yellow koji mold).